Here is a 337-residue protein sequence, read N- to C-terminus: MPNLTIALDAMGGDFGPHVTIPAAINILKKYKYLSIYLVGNEAEINSLLQNTSTSIKSRFTIIPSLDDIPMDLAPALALRNFKQSSMRMALNLVREGKAQACVSAGNTGALMVLSRHLLKVLPFVDRPALVSTLPSMTTQPVYMLDLGVNVSCDADALLQFALMGSALAEHVGNIPIPRVALLNVGQEDIKGNDLVKHAAQLLSKNPNLNYIGFIEGNDIFSGKADVIVCDGFTGNVALKTSEGVVDLVISQLTSVSNNNIFTKLLSLLVKPLIMSSLKRLKPDQYNGATLLGLPGIVIKSHGNAKQVAFEFAIEQAVKEVESGLVNKISASLDIID.

This sequence belongs to the PlsX family. Homodimer. Probably interacts with PlsY.

The protein localises to the cytoplasm. The enzyme catalyses a fatty acyl-[ACP] + phosphate = an acyl phosphate + holo-[ACP]. It functions in the pathway lipid metabolism; phospholipid metabolism. Catalyzes the reversible formation of acyl-phosphate (acyl-PO(4)) from acyl-[acyl-carrier-protein] (acyl-ACP). This enzyme utilizes acyl-ACP as fatty acyl donor, but not acyl-CoA. This is Phosphate acyltransferase from Moritella marina (Vibrio marinus).